Consider the following 389-residue polypeptide: Capsule polysaccharide export protein KpsS (389 aa).

The chain is Capsule polysaccharide export protein KpsS (kpsS) from Escherichia coli.